Here is a 64-residue protein sequence, read N- to C-terminus: Large ribosomal subunit protein bL35 (64 aa).

This sequence belongs to the bacterial ribosomal protein bL35 family.

In Shewanella baltica (strain OS223), this protein is Large ribosomal subunit protein bL35.